Reading from the N-terminus, the 520-residue chain is Cobalt-zinc-cadmium resistance protein CzcB (520 aa).

A helical membrane pass occupies residues 9-29 (AAIAAIVLVGGVATGGVLLSG). The disordered stretch occupies residues 28–85 (SGRSAPEEQGGHSESKGHGDTEHHGKQAAEADHKDDKSHGDGEHHEVKKGPNGGALFS). Basic and acidic residues predominate over residues 32-76 (APEEQGGHSESKGHGDTEHHGKQAAEADHKDDKSHGDGEHHEVKK). Residues 286–320 (EQKISAEQDYLSARNALQEAQISVQNAQQKLTAIG) adopt a coiled-coil conformation.

It belongs to the membrane fusion protein (MFP) (TC 8.A.1) family.

It localises to the cell inner membrane. In terms of biological role, czcA and CzcB together would act in zinc efflux nearly as effectively as the complete czc efflux system (CzcABC). The CzcB protein is thought to funnel zinc cations to the CzcA transport protein. The protein is Cobalt-zinc-cadmium resistance protein CzcB (czcB) of Cupriavidus metallidurans (strain ATCC 43123 / DSM 2839 / NBRC 102507 / CH34) (Ralstonia metallidurans).